Reading from the N-terminus, the 391-residue chain is ATP phosphoribosyltransferase regulatory subunit (391 aa).

The protein belongs to the class-II aminoacyl-tRNA synthetase family. HisZ subfamily. As to quaternary structure, heteromultimer composed of HisG and HisZ subunits.

The protein resides in the cytoplasm. The protein operates within amino-acid biosynthesis; L-histidine biosynthesis; L-histidine from 5-phospho-alpha-D-ribose 1-diphosphate: step 1/9. Its function is as follows. Required for the first step of histidine biosynthesis. May allow the feedback regulation of ATP phosphoribosyltransferase activity by histidine. This chain is ATP phosphoribosyltransferase regulatory subunit, found in Prochlorococcus marinus (strain NATL1A).